A 514-amino-acid polypeptide reads, in one-letter code: Cytochrome P450 87A3 (514 aa).

Helical transmembrane passes span 36 to 56 (ASSMAYIALLCAALAAVVALL) and 315 to 335 (LMFVLLFASFETTALALTIGV). Cys463 contacts heme.

This sequence belongs to the cytochrome P450 family. Requires heme as cofactor. Expressed in roots and coleoptiles, but not in leaves.

The protein localises to the cytoplasmic vesicle membrane. The polypeptide is Cytochrome P450 87A3 (CYP87A3) (Oryza sativa subsp. japonica (Rice)).